The chain runs to 284 residues: Pantothenate synthetase (284 aa).

An ATP-binding site is contributed by Met30 to His37. Residue His37 is the Proton donor of the active site. Gln61 contributes to the (R)-pantoate binding site. Gln61 contributes to the beta-alanine binding site. Gly149–Asp152 contacts ATP. Gln155 contributes to the (R)-pantoate binding site. ATP is bound by residues Val178 and Leu186–Arg189.

The protein belongs to the pantothenate synthetase family. In terms of assembly, homodimer.

It localises to the cytoplasm. The enzyme catalyses (R)-pantoate + beta-alanine + ATP = (R)-pantothenate + AMP + diphosphate + H(+). It functions in the pathway cofactor biosynthesis; (R)-pantothenate biosynthesis; (R)-pantothenate from (R)-pantoate and beta-alanine: step 1/1. Catalyzes the condensation of pantoate with beta-alanine in an ATP-dependent reaction via a pantoyl-adenylate intermediate. This is Pantothenate synthetase from Klebsiella pneumoniae (strain 342).